We begin with the raw amino-acid sequence, 152 residues long: Flagellar assembly factor FliW (152 aa).

It belongs to the FliW family. As to quaternary structure, interacts with translational regulator CsrA and flagellin(s).

Its subcellular location is the cytoplasm. In terms of biological role, acts as an anti-CsrA protein, binds CsrA and prevents it from repressing translation of its target genes, one of which is flagellin. Binds to flagellin and participates in the assembly of the flagellum. The sequence is that of Flagellar assembly factor FliW from Desulfitobacterium hafniense (strain DSM 10664 / DCB-2).